A 607-amino-acid chain; its full sequence is Protein PLASTID MOVEMENT IMPAIRED 2 (607 aa).

2 coiled-coil regions span residues 66 to 295 (KAKK…NAEL) and 329 to 445 (MLER…ESRR).

This sequence belongs to the WEB family. As to quaternary structure, interacts with WEB1. In terms of tissue distribution, ubiquitous but preferentially in chloroplast-containing tissues.

The protein resides in the cytoplasm. Required for the chloroplast avoidance response under high intensity blue light. This avoidance response consists in the relocation of chloroplasts on the anticlinal side of exposed cells. Acts in association with WEB1 to maintain the velocity of chloroplast photorelocation movement via cp-actin filaments regulation. In Arabidopsis thaliana (Mouse-ear cress), this protein is Protein PLASTID MOVEMENT IMPAIRED 2 (PMI2).